The primary structure comprises 1268 residues: ATP-dependent helicase/nuclease subunit A (1268 aa).

In terms of domain architecture, UvrD-like helicase ATP-binding spans 3-476 (TKWTEEQELA…IMLYKNFRSR (474 aa)). 24-31 (AAAGSGKT) contributes to the ATP binding site. The region spanning 528 to 824 (IENLKVAGDI…RIMSIHKSKG (297 aa)) is the UvrD-like helicase C-terminal domain.

Belongs to the helicase family. AddA subfamily. Heterodimer of AddA and AddB/RexB. Requires Mg(2+) as cofactor.

The catalysed reaction is Couples ATP hydrolysis with the unwinding of duplex DNA by translocating in the 3'-5' direction.. It catalyses the reaction ATP + H2O = ADP + phosphate + H(+). Its function is as follows. The heterodimer acts as both an ATP-dependent DNA helicase and an ATP-dependent, dual-direction single-stranded exonuclease. Recognizes the chi site generating a DNA molecule suitable for the initiation of homologous recombination. The AddA nuclease domain is required for chi fragment generation; this subunit has the helicase and 3' -&gt; 5' nuclease activities. In Clostridium perfringens (strain 13 / Type A), this protein is ATP-dependent helicase/nuclease subunit A.